The chain runs to 104 residues: UPF0134 protein MPN_104 (104 aa).

Belongs to the UPF0134 family.

This chain is UPF0134 protein MPN_104, found in Mycoplasma pneumoniae (strain ATCC 29342 / M129 / Subtype 1) (Mycoplasmoides pneumoniae).